A 581-amino-acid polypeptide reads, in one-letter code: NADH-quinone oxidoreductase subunit C/D (581 aa).

The segment at 1–172 is NADH dehydrogenase I subunit C; it reads MSGAELISDL…PPFVMTAARF (172 aa). Residues 196–581 are NADH dehydrogenase I subunit D; that stretch reads ELMILNYGPH…IDYVMSDVDR (386 aa).

It in the N-terminal section; belongs to the complex I 30 kDa subunit family. The protein in the C-terminal section; belongs to the complex I 49 kDa subunit family. In terms of assembly, NDH-1 is composed of 13 different subunits. Subunits NuoB, CD, E, F, and G constitute the peripheral sector of the complex.

It localises to the cell inner membrane. The enzyme catalyses a quinone + NADH + 5 H(+)(in) = a quinol + NAD(+) + 4 H(+)(out). Functionally, NDH-1 shuttles electrons from NADH, via FMN and iron-sulfur (Fe-S) centers, to quinones in the respiratory chain. The immediate electron acceptor for the enzyme in this species is believed to be ubiquinone. Couples the redox reaction to proton translocation (for every two electrons transferred, four hydrogen ions are translocated across the cytoplasmic membrane), and thus conserves the redox energy in a proton gradient. In Rhodopseudomonas palustris (strain BisA53), this protein is NADH-quinone oxidoreductase subunit C/D.